The sequence spans 624 residues: Chromosomal replication initiator protein DnaA (624 aa).

The segment at 1-99 is domain I, interacts with DnaA modulators; that stretch reads MADVPADLAA…SAGEPPSPPA (99 aa). Residues 88-284 are disordered; sequence DDSAGEPPSP…APGPGEPHAR (197 aa). Residues 100–283 form a domain II region; it reads PPMHQSHQSQ…PAPGPGEPHA (184 aa). Positions 102-112 are enriched in low complexity; the sequence is MHQSHQSQQGH. 2 stretches are compositionally biased toward basic and acidic residues: residues 118–141 and 176–206; these read QRDD…DGMP and GYQD…REQA. A compositionally biased stretch (gly residues) spans 250-264; sequence PRQGGHGPGRTGGSV. Residues 284–500 are domain III, AAA+ region; the sequence is RLNPKYLFDT…GALIRVTAFA (217 aa). Positions 328, 330, 331, and 332 each coordinate ATP. The domain IV, binds dsDNA stretch occupies residues 501-624; it reads SLNRQPVDLG…TELTNRIKNG (124 aa).

It belongs to the DnaA family. Oligomerizes as a right-handed, spiral filament on DNA at oriC.

The protein resides in the cytoplasm. Its function is as follows. Plays an essential role in the initiation and regulation of chromosomal replication. ATP-DnaA binds to the origin of replication (oriC) to initiate formation of the DNA replication initiation complex once per cell cycle. Binds the DnaA box (a 9 base pair repeat at the origin) and separates the double-stranded (ds)DNA. Forms a right-handed helical filament on oriC DNA; dsDNA binds to the exterior of the filament while single-stranded (ss)DNA is stabiized in the filament's interior. The ATP-DnaA-oriC complex binds and stabilizes one strand of the AT-rich DNA unwinding element (DUE), permitting loading of DNA polymerase. After initiation quickly degrades to an ADP-DnaA complex that is not apt for DNA replication. Binds acidic phospholipids. The DnaA box consensus is 5'-(T/C)(T/C)(G/AC)TCCACA-3'. The polypeptide is Chromosomal replication initiator protein DnaA (Streptomyces anulatus (Streptomyces chrysomallus)).